Consider the following 520-residue polypeptide: GMP synthase [glutamine-hydrolyzing] (520 aa).

Positions 9 to 202 constitute a Glutamine amidotransferase type-1 domain; the sequence is RVLIVDFGSQ…LFNIAGLKGD (194 aa). Cys86 functions as the Nucleophile in the catalytic mechanism. Catalysis depends on residues His176 and Glu178. The 193-residue stretch at 203 to 395 folds into the GMPS ATP-PPase domain; that stretch reads WTMAAFRQEM…LGLAPAFVGR (193 aa). 230–236 contributes to the ATP binding site; it reads SGGVDSS.

In terms of assembly, homodimer.

It catalyses the reaction XMP + L-glutamine + ATP + H2O = GMP + L-glutamate + AMP + diphosphate + 2 H(+). The protein operates within purine metabolism; GMP biosynthesis; GMP from XMP (L-Gln route): step 1/1. Functionally, catalyzes the synthesis of GMP from XMP. The sequence is that of GMP synthase [glutamine-hydrolyzing] from Caulobacter vibrioides (strain ATCC 19089 / CIP 103742 / CB 15) (Caulobacter crescentus).